The following is a 70-amino-acid chain: Protein FlmC (70 aa).

Its function is as follows. Component of a type I toxin-antitoxin (TA) system. Either this protein or sequences upstream of it are required for translation of downstream flmA; this could be translationally coupled to flmA. This Escherichia coli (strain K12) protein is Protein FlmC (flmC).